A 380-amino-acid chain; its full sequence is MSKVDYDSILKDFPFPPAVKEEIKAELEKHGLKKTEAKKVVEKCFQAYLANLMEPGEAAGIVAAQSIGEPGTQMTMRTFHYAGVAEINVTLGLPRLIEILDVRKNPSTPMMTIRLLPEYAKDREKAREVANRIEATYVKDVADIEVDIRRFTIIVKPDEKALERKGLTVEDLKSKIGKALKTEVEETEQGLAVQITEPSYKALMAAFDKLKDTVIMGLKEIKRVIIRKEEDEYVLYTEGSNLKKIMKVKGVDFTRTTTNNIYEIYEVLGIEAARNAIIREALDTLEEQGLEVDVRHIMLVADVMTADGELRQIGRHGVAGEKQSILARAAFEMTVNNLLDAAVRGEEDHLRGITENIIVGQPIKLGTGDVELVLKMGGKK.

Belongs to the RNA polymerase beta' chain family. Part of the RNA polymerase complex.

It localises to the cytoplasm. The catalysed reaction is RNA(n) + a ribonucleoside 5'-triphosphate = RNA(n+1) + diphosphate. DNA-dependent RNA polymerase (RNAP) catalyzes the transcription of DNA into RNA using the four ribonucleoside triphosphates as substrates. Forms part of the jaw domain. The protein is DNA-directed RNA polymerase subunit Rpo1C of Archaeoglobus fulgidus (strain ATCC 49558 / DSM 4304 / JCM 9628 / NBRC 100126 / VC-16).